A 262-amino-acid polypeptide reads, in one-letter code: Putative 1-acyl-sn-glycerol-3-phosphate acyltransferase acl-1 (262 aa).

Helical transmembrane passes span 3-23 (FLAI…PVIG), 29-49 (VYFG…SIPF), and 89-109 (IIIA…AWPV). The HXXXXD motif motif lies at 94–99 (HQSALD).

The protein belongs to the 1-acyl-sn-glycerol-3-phosphate acyltransferase family.

It is found in the membrane. It carries out the reaction a 1-acyl-sn-glycero-3-phosphate + an acyl-CoA = a 1,2-diacyl-sn-glycero-3-phosphate + CoA. It participates in phospholipid metabolism; CDP-diacylglycerol biosynthesis; CDP-diacylglycerol from sn-glycerol 3-phosphate: step 2/3. Its function is as follows. Converts lysophosphatidic acid (LPA) into phosphatidic acid by incorporating an acyl moiety at the sn-2 position of the glycerol backbone. This Caenorhabditis elegans protein is Putative 1-acyl-sn-glycerol-3-phosphate acyltransferase acl-1 (acl-1).